The sequence spans 184 residues: Large ribosomal subunit protein eL13 (184 aa).

The disordered stretch occupies residues 28-53 (PARKERRRQARKAKAQRIAPRPASGP). Residues 31–42 (KERRRQARKAKA) are compositionally biased toward basic residues.

The protein belongs to the eukaryotic ribosomal protein eL13 family.

The chain is Large ribosomal subunit protein eL13 (RPL13) from Schistosoma mansoni (Blood fluke).